Here is a 149-residue protein sequence, read N- to C-terminus: Nucleoside diphosphate kinase (149 aa).

ATP-binding residues include K9, F57, R85, T91, R102, and N112. H115 serves as the catalytic Pros-phosphohistidine intermediate.

It belongs to the NDK family. In terms of assembly, homotetramer. It depends on Mg(2+) as a cofactor.

Its subcellular location is the cytoplasm. It carries out the reaction a 2'-deoxyribonucleoside 5'-diphosphate + ATP = a 2'-deoxyribonucleoside 5'-triphosphate + ADP. The enzyme catalyses a ribonucleoside 5'-diphosphate + ATP = a ribonucleoside 5'-triphosphate + ADP. Major role in the synthesis of nucleoside triphosphates other than ATP. The ATP gamma phosphate is transferred to the NDP beta phosphate via a ping-pong mechanism, using a phosphorylated active-site intermediate. In Desulfitobacterium hafniense (strain Y51), this protein is Nucleoside diphosphate kinase.